Here is a 601-residue protein sequence, read N- to C-terminus: MVQTKHFCMLHRTLLCPKRIKFLQSISKLKRHITQIHAFVISTGNLLNGSSISRDLIASCGRIGEISYARKVFDELPQRGVSVYNSMIVVYSRGKNPDEVLRLYDQMIAEKIQPDSSTFTMTIKACLSGLVLEKGEAVWCKAVDFGYKNDVFVCSSVLNLYMKCGKMDEAEVLFGKMAKRDVICWTTMVTGFAQAGKSLKAVEFYREMQNEGFGRDRVVMLGLLQASGDLGDTKMGRSVHGYLYRTGLPMNVVVETSLVDMYAKVGFIEVASRVFSRMMFKTAVSWGSLISGFAQNGLANKAFEAVVEMQSLGFQPDLVTLVGVLVACSQVGSLKTGRLVHCYILKRHVLDRVTATALMDMYSKCGALSSSREIFEHVGRKDLVCWNTMISCYGIHGNGQEVVSLFLKMTESNIEPDHATFASLLSALSHSGLVEQGQHWFSVMINKYKIQPSEKHYVCLIDLLARAGRVEEALDMINSEKLDNALPIWVALLSGCINHRNLSVGDIAANKILQLNPDSIGIQTLVSNFFATANKWKEVAKVRKLMRNGAMEKVPGYSAIEVNGELRTFLMEDLSHHEHYHMLQVLRNLKTEIRDVCSGVE.

A mitochondrion-targeting transit peptide spans 1 to 80; it reads MVQTKHFCML…KVFDELPQRG (80 aa). 13 PPR repeats span residues 49-79, 80-114, 115-149, 150-180, 181-215, 216-250, 251-281, 282-316, 317-347, 351-381, 382-416, 417-452, and 453-487; these read GSSI…LPQR, GVSV…KIQP, DSST…GYKN, DVFV…MAKR, DVIC…GFGR, DRVV…GLPM, NVVV…MMFK, TAVS…GFQP, DLVT…ILKR, DRVT…VGRK, DLVC…NIEP, DHAT…KIQP, and SEKH…NALP. The type E motif stretch occupies residues 488 to 563; that stretch reads IWVALLSGCI…VPGYSAIEVN (76 aa). The type E(+) motif stretch occupies residues 564 to 594; that stretch reads GELRTFLMEDLSHHEHYHMLQVLRNLKTEIR.

This sequence belongs to the PPR family. PCMP-E subfamily.

The protein localises to the mitochondrion. This chain is Putative pentatricopeptide repeat-containing protein At3g25060, mitochondrial (PCMP-E96), found in Arabidopsis thaliana (Mouse-ear cress).